Here is a 319-residue protein sequence, read N- to C-terminus: Tetrahydromethanopterin S-methyltransferase subunit H (319 aa).

It belongs to the MtrH family. As to quaternary structure, the complex is composed of 8 subunits; MtrA, MtrB, MtrC, MtrD, MtrE, MtrF, MtrG and MtrH.

It carries out the reaction 5-methyl-5,6,7,8-tetrahydromethanopterin + coenzyme M + 2 Na(+)(in) = 5,6,7,8-tetrahydromethanopterin + methyl-coenzyme M + 2 Na(+)(out). It participates in one-carbon metabolism; methanogenesis from CO(2); methyl-coenzyme M from 5,10-methylene-5,6,7,8-tetrahydromethanopterin: step 2/2. In terms of biological role, part of a complex that catalyzes the formation of methyl-coenzyme M and tetrahydromethanopterin from coenzyme M and methyl-tetrahydromethanopterin. This is an energy-conserving, sodium-ion translocating step. MtrH catalyzes the transfer of the methyl group from methyl-tetrahydromethanopterin to the corrinoid prosthetic group of MtrA. This chain is Tetrahydromethanopterin S-methyltransferase subunit H, found in Methanococcus vannielii (strain ATCC 35089 / DSM 1224 / JCM 13029 / OCM 148 / SB).